The following is a 95-amino-acid chain: uncharacterized protein (95 aa).

The signal sequence occupies residues 1 to 17; sequence MTSSLVIYIFLWSRLIC.

This is an uncharacterized protein from Saccharomyces cerevisiae (strain ATCC 204508 / S288c) (Baker's yeast).